Consider the following 427-residue polypeptide: Trigger factor (427 aa).

The region spanning 163-248 (GDIVVIDFAG…LKEIKRKELA (86 aa)) is the PPIase FKBP-type domain.

This sequence belongs to the FKBP-type PPIase family. Tig subfamily.

Its subcellular location is the cytoplasm. It carries out the reaction [protein]-peptidylproline (omega=180) = [protein]-peptidylproline (omega=0). Involved in protein export. Acts as a chaperone by maintaining the newly synthesized protein in an open conformation. Functions as a peptidyl-prolyl cis-trans isomerase. In Carboxydothermus hydrogenoformans (strain ATCC BAA-161 / DSM 6008 / Z-2901), this protein is Trigger factor.